Here is a 289-residue protein sequence, read N- to C-terminus: HTH-type transcriptional regulator SoxR (289 aa).

The region spanning 1 to 58 is the HTH lysR-type domain; the sequence is MEIKDLQIFQKVVEYGSVSKAAKSLNYVQSYVTVRIQKLEEELQTELFHRSSRGMVLN. The segment at residues 18-37 is a DNA-binding region (H-T-H motif); sequence VSKAAKSLNYVQSYVTVRIQ.

Belongs to the LysR transcriptional regulatory family.

In terms of biological role, transcriptional repressor of soxA gene expression. In Arthrobacter sp. (strain TE1826), this protein is HTH-type transcriptional regulator SoxR (soxR).